The sequence spans 872 residues: Leucine--tRNA ligase (872 aa).

The 'HIGH' region signature appears at 56–66; it reads PYPSGNLHMGH. Positions 629–633 match the 'KMSKS' region motif; it reads KMSKS. K632 lines the ATP pocket.

It belongs to the class-I aminoacyl-tRNA synthetase family.

The protein resides in the cytoplasm. It carries out the reaction tRNA(Leu) + L-leucine + ATP = L-leucyl-tRNA(Leu) + AMP + diphosphate. This chain is Leucine--tRNA ligase, found in Prochlorococcus marinus (strain MIT 9211).